The following is a 444-amino-acid chain: Methylenetetrahydrofolate--tRNA-(uracil-5-)-methyltransferase TrmFO (444 aa).

10-15 serves as a coordination point for FAD; sequence GAGLAG.

This sequence belongs to the MnmG family. TrmFO subfamily. FAD is required as a cofactor.

It is found in the cytoplasm. The catalysed reaction is uridine(54) in tRNA + (6R)-5,10-methylene-5,6,7,8-tetrahydrofolate + NADH + H(+) = 5-methyluridine(54) in tRNA + (6S)-5,6,7,8-tetrahydrofolate + NAD(+). It catalyses the reaction uridine(54) in tRNA + (6R)-5,10-methylene-5,6,7,8-tetrahydrofolate + NADPH + H(+) = 5-methyluridine(54) in tRNA + (6S)-5,6,7,8-tetrahydrofolate + NADP(+). Catalyzes the folate-dependent formation of 5-methyl-uridine at position 54 (M-5-U54) in all tRNAs. This is Methylenetetrahydrofolate--tRNA-(uracil-5-)-methyltransferase TrmFO from Streptococcus mutans serotype c (strain ATCC 700610 / UA159).